Reading from the N-terminus, the 359-residue chain is Alanine racemase, biosynthetic (359 aa).

Lys34 acts as the Proton acceptor; specific for D-alanine in catalysis. Lys34 is subject to N6-(pyridoxal phosphate)lysine. Residue Arg129 coordinates substrate. The active-site Proton acceptor; specific for L-alanine is the Tyr255. A substrate-binding site is contributed by Met303.

The protein belongs to the alanine racemase family. In terms of assembly, monomer but homodimer in the presence of the substrate. It depends on pyridoxal 5'-phosphate as a cofactor.

The catalysed reaction is L-alanine = D-alanine. The protein operates within amino-acid biosynthesis; D-alanine biosynthesis; D-alanine from L-alanine: step 1/1. Its pathway is cell wall biogenesis; peptidoglycan biosynthesis. Functionally, catalyzes the interconversion of L-alanine and D-alanine. The sequence is that of Alanine racemase, biosynthetic (alr) from Shigella sonnei.